The following is a 343-amino-acid chain: KRR1 small subunit processome component homolog (343 aa).

The KH domain occupies 126-194 (DIIKIGNLVH…VRDIVLETMN (69 aa)). A compositionally biased stretch (basic residues) spans 230–246 (KNKNISKRKQPKNKKPK). Residues 230-343 (KNKNISKRKQ…LMKANKKNRS (114 aa)) are disordered. Composition is skewed to basic and acidic residues over residues 272–303 (LNKE…RNKD) and 318–331 (RPAE…DALK). A coiled-coil region spans residues 272–341 (LNKEQKQAKK…AKLMKANKKN (70 aa)). The span at 333–343 (KLMKANKKNRS) shows a compositional bias: basic residues.

It belongs to the KRR1 family. Monomer. Component of the ribosomal small subunit (SSU) processome.

It is found in the nucleus. It localises to the nucleolus. Functionally, required for 40S ribosome biogenesis. Involved in nucleolar processing of pre-18S ribosomal RNA and ribosome assembly. Binds to RNA. Required for female germline development, cell viability during eye development and for survival of dividing cells and epithelial cells during early wing disk development. This is KRR1 small subunit processome component homolog from Drosophila virilis (Fruit fly).